The primary structure comprises 358 residues: Snurportin-1 (358 aa).

N-acetylmethionine is present on methionine 1. 2 disordered regions span residues 1–26 (MEELSQALASSFSVSQELNSTAAPHP) and 69–90 (DWTGMESGEEENKKDEEEMDID). Residues 1 to 65 (MEELSQALAS…LDYVNHARRL (65 aa)) are necessary for interaction with KPNB1 and m3G-cap U1 and U5 snRNP import receptor activity. Residues 1–160 (MEELSQALAS…NRFSSLLPGG (160 aa)) form a necessary for interaction with XPO1 region. Positions 7 to 22 (ALASSFSVSQELNSTA) are enriched in polar residues. The IBB domain maps to 11–73 (SFSVSQELNS…RLAEDDWTGM (63 aa)). Serine 75 carries the phosphoserine modification. The segment at 128–130 (GKR) is interaction with m3G-cap structure. Residues 210-329 (MHSKLPEEEG…DTKEKLTHKA (120 aa)) are necessary for binding to the m3G-cap structure. The span at 315–341 (KRSQEDTKEKLTHKASENGHYELEHLS) shows a compositional bias: basic and acidic residues. The interval 315-358 (KRSQEDTKEKLTHKASENGHYELEHLSTPKLRNPPHSSESLMDN) is disordered. Polar residues predominate over residues 349–358 (PHSSESLMDN). Serine 351 carries the post-translational modification Phosphoserine.

The protein belongs to the snurportin family. In terms of assembly, component of an import snRNP complex composed of KPNB1, SNUPN, SMN1 and ZNF259. Component of a nuclear export receptor complex composed of KPNB1, Ran, SNUPN and XPO1. Found in a trimeric export complex with SNUPN, Ran and XPO1. Interacts (via IBB domain) with KPNB1; the interaction is direct. Interacts with DDX20, IPO7, SMN1, SNRPB and XPO1. Interacts directly with XPO1. Its interaction with XPO1 and binding to m3G-cap U snRNPs appears to be mutually exclusive. Can form homomers.

The protein resides in the nucleus. It is found in the cytoplasm. Functionally, functions as an U snRNP-specific nuclear import adapter. Involved in the trimethylguanosine (m3G)-cap-dependent nuclear import of U snRNPs. Binds specifically to the terminal m3G-cap U snRNAs. The protein is Snurportin-1 (Snupn) of Mus musculus (Mouse).